A 98-amino-acid polypeptide reads, in one-letter code: NADH-ubiquinone oxidoreductase chain 4L (98 aa).

3 helical membrane passes run 1–21 (MTPTYMNIMLAFTISLLGMLT), 27–47 (VASLLCLEGMMMSLFIMATLI), and 61–81 (IILLVFAACETAVGLALLISI).

This sequence belongs to the complex I subunit 4L family. As to quaternary structure, core subunit of respiratory chain NADH dehydrogenase (Complex I) which is composed of 45 different subunits.

The protein localises to the mitochondrion inner membrane. The enzyme catalyses a ubiquinone + NADH + 5 H(+)(in) = a ubiquinol + NAD(+) + 4 H(+)(out). Core subunit of the mitochondrial membrane respiratory chain NADH dehydrogenase (Complex I) which catalyzes electron transfer from NADH through the respiratory chain, using ubiquinone as an electron acceptor. Part of the enzyme membrane arm which is embedded in the lipid bilayer and involved in proton translocation. The chain is NADH-ubiquinone oxidoreductase chain 4L (MT-ND4L) from Macaca fascicularis (Crab-eating macaque).